Consider the following 319-residue polypeptide: 1-aminocyclopropane-1-carboxylate oxidase (319 aa).

The Fe2OG dioxygenase domain occupies 153 to 253; sequence PTFGTKVSNY…RMSIASFYNP (101 aa). Fe cation contacts are provided by His-177, Asp-179, and His-234.

The protein belongs to the iron/ascorbate-dependent oxidoreductase family. Fe cation serves as cofactor.

It catalyses the reaction 1-aminocyclopropane-1-carboxylate + L-ascorbate + O2 = ethene + L-dehydroascorbate + hydrogen cyanide + CO2 + 2 H2O. The protein operates within alkene biosynthesis; ethylene biosynthesis via S-adenosyl-L-methionine; ethylene from S-adenosyl-L-methionine: step 2/2. The sequence is that of 1-aminocyclopropane-1-carboxylate oxidase (ACO) from Actinidia deliciosa (Kiwi).